We begin with the raw amino-acid sequence, 128 residues long: Otoraplin (128 aa).

Positions 1 to 17 (MARILLLFLPGLVAVCA) are cleaved as a signal peptide. Disulfide bonds link cysteine 32-cysteine 37 and cysteine 55-cysteine 127. Positions 39–110 (YTISLASAQE…PRNLVKEQRV (72 aa)) constitute an SH3 domain.

This sequence belongs to the MIA/OTOR family. In terms of tissue distribution, highly expressed in cochlea.

It is found in the secreted. This chain is Otoraplin (OTOR), found in Homo sapiens (Human).